The sequence spans 237 residues: Phosphoribosylaminoimidazole-succinocarboxamide synthase (237 aa).

The protein belongs to the SAICAR synthetase family.

It catalyses the reaction 5-amino-1-(5-phospho-D-ribosyl)imidazole-4-carboxylate + L-aspartate + ATP = (2S)-2-[5-amino-1-(5-phospho-beta-D-ribosyl)imidazole-4-carboxamido]succinate + ADP + phosphate + 2 H(+). The protein operates within purine metabolism; IMP biosynthesis via de novo pathway; 5-amino-1-(5-phospho-D-ribosyl)imidazole-4-carboxamide from 5-amino-1-(5-phospho-D-ribosyl)imidazole-4-carboxylate: step 1/2. The protein is Phosphoribosylaminoimidazole-succinocarboxamide synthase of Escherichia coli O7:K1 (strain IAI39 / ExPEC).